The primary structure comprises 460 residues: Argininosuccinate lyase (460 aa).

The protein belongs to the lyase 1 family. Argininosuccinate lyase subfamily.

Its subcellular location is the cytoplasm. It carries out the reaction 2-(N(omega)-L-arginino)succinate = fumarate + L-arginine. It functions in the pathway amino-acid biosynthesis; L-arginine biosynthesis; L-arginine from L-ornithine and carbamoyl phosphate: step 3/3. This is Argininosuccinate lyase from Streptococcus uberis (strain ATCC BAA-854 / 0140J).